The following is a 134-amino-acid chain: DNA-binding protein H-NS homolog (134 aa).

Residues 106–134 (HKTWTGQGRTPRPIQNALNKGKSLSDFEI) form a disordered region. Residues 112-117 (QGRTPR) mediate DNA binding.

Belongs to the histone-like protein H-NS family. In terms of assembly, homodimer that oligomerizes on DNA into higher-order complexes that form bridges between disparate regions of DNA compacting it.

It is found in the cytoplasm. Its subcellular location is the nucleoid. Its function is as follows. A DNA-binding protein implicated in transcriptional repression and chromosome organization and compaction. Binds nucleation sites in AT-rich DNA and bridges them, forming higher-order nucleoprotein complexes and condensing the chromosome. As many horizontally transferred genes are AT-rich, it plays a central role in silencing foreign genes. A subset of genes are repressed by H-NS in association with other proteins. In Haemophilus influenzae (strain ATCC 51907 / DSM 11121 / KW20 / Rd), this protein is DNA-binding protein H-NS homolog (hns).